The primary structure comprises 136 residues: Histone H3.Y (136 aa).

A compositionally biased stretch (low complexity) spans 1-16; the sequence is MARTKQTARKATAWQA. The segment at 1-43 is disordered; the sequence is MARTKQTARKATAWQAPRKPLATKAAGKRAPPTGGIKKPHRYK. Asymmetric dimethylarginine is present on arginine 3. At arginine 3 the chain carries Citrulline; alternate. Threonine 4 bears the Phosphothreonine mark. Residue lysine 5 is modified to Allysine; alternate. Lysine 5 bears the N6,N6,N6-trimethyllysine; alternate mark. At lysine 5 the chain carries N6,N6-dimethyllysine; alternate. Lysine 5 carries the post-translational modification N6-(2-hydroxyisobutyryl)lysine; alternate. At lysine 5 the chain carries N6-(beta-hydroxybutyryl)lysine; alternate. At lysine 5 the chain carries N6-acetyllysine; alternate. At lysine 5 the chain carries N6-crotonyllysine; alternate. N6-methyllysine; alternate is present on lysine 5. The residue at position 6 (glutamine 6) is a 5-glutamyl dopamine; alternate. Residue glutamine 6 is modified to 5-glutamyl serotonin; alternate. Threonine 7 carries the post-translational modification Phosphothreonine. Citrulline; alternate is present on arginine 9. Arginine 9 bears the Symmetric dimethylarginine mark. Lysine 10 carries the N6,N6,N6-trimethyllysine; alternate modification. Lysine 10 carries the post-translational modification N6,N6-dimethyllysine; alternate. Position 10 is an N6-(2-hydroxyisobutyryl)lysine; alternate (lysine 10). Lysine 10 carries the post-translational modification N6-(beta-hydroxybutyryl)lysine; alternate. At lysine 10 the chain carries N6-acetyllysine; alternate. Residue lysine 10 is modified to N6-crotonyllysine; alternate. Lysine 10 carries the N6-methyllysine; alternate modification. Lysine 10 bears the N6-butyryllysine; alternate mark. N6-lactoyllysine; alternate is present on lysine 10. Phosphothreonine is present on threonine 12. Asymmetric dimethylarginine is present on arginine 18. Arginine 18 carries the post-translational modification Citrulline; alternate. Residues lysine 19, lysine 24, lysine 28, and lysine 37 each carry the N6-(2-hydroxyisobutyryl)lysine; alternate modification. Lysine 19, lysine 24, and lysine 28 each carry N6-(beta-hydroxybutyryl)lysine; alternate. Residues lysine 19, lysine 24, lysine 28, and lysine 37 each carry the N6-acetyllysine; alternate modification. N6-crotonyllysine; alternate is present on residues lysine 19, lysine 24, and lysine 28. Residues lysine 19, lysine 24, lysine 28, and lysine 37 each carry the N6-methyllysine; alternate modification. Lysine 19 and lysine 24 each carry N6-butyryllysine; alternate. N6-lactoyllysine; alternate occurs at positions 19, 24, and 28. Lysine 19, lysine 24, and lysine 28 each carry N6-glutaryllysine; alternate. N6,N6,N6-trimethyllysine; alternate occurs at positions 28 and 37. N6,N6-dimethyllysine; alternate occurs at positions 28 and 37. Lysine 38 bears the N6-methyllysine mark. Phosphotyrosine is present on tyrosine 42. Lysine 57 is subject to N6,N6,N6-trimethyllysine; alternate. Lysine 57 carries the post-translational modification N6-(2-hydroxyisobutyryl)lysine; alternate. Residue lysine 57 is modified to N6-(beta-hydroxybutyryl)lysine; alternate. N6-acetyllysine; alternate is present on lysine 57. An N6-crotonyllysine; alternate modification is found at lysine 57. An N6-lactoyllysine; alternate modification is found at lysine 57. The residue at position 57 (lysine 57) is an N6-glutaryllysine; alternate. Lysine 57 is subject to N6-methyllysine. Lysine 57 carries the N6-succinyllysine; alternate modification. Serine 58 carries the phosphoserine modification. Lysine 65 carries the post-translational modification N6-(2-hydroxyisobutyryl)lysine; alternate. Lysine 65 carries the post-translational modification N6-methyllysine; alternate. Serine 87 carries the phosphoserine modification. The residue at position 108 (threonine 108) is a Phosphothreonine.

Belongs to the histone H3 family. In terms of assembly, the nucleosome is a histone octamer containing two molecules each of H2A, H2B, H3 and H4 assembled in one H3-H4 heterotetramer and two H2A-H2B heterodimers. The octamer wraps approximately 147 bp of DNA. Interacts with HIRA, a chaperone required for its incorporation into nucleosomes. Does not interact with DAXX chaperone. In terms of processing, acetylation is generally linked to gene activation. Acetylation on Lys-10 (H3K9ac) impairs methylation at Arg-9 (H3R8me2s). Acetylation on Lys-19 (H3K18ac) and Lys-24 (H3K24ac) favors methylation at Arg-18 (H3R17me). Citrullination at Arg-9 (H3R8ci) and/or Arg-18 (H3R17ci) impairs methylation and represses transcription. Post-translationally, asymmetric dimethylation at Arg-18 (H3R17me2a) is linked to gene activation. Symmetric dimethylation at Arg-9 (H3R8me2s) is linked to gene repression. Asymmetric dimethylation at Arg-3 (H3R2me2a) is linked to gene repression and is mutually exclusive with H3 Lys-5 methylation (H3K4me2 and H3K4me3). H3R2me2a is present at the 3' of genes regardless of their transcription state and is enriched on inactive promoters, while it is absent on active promoters. In terms of processing, methylation at Lys-5 (H3K4me) facilitates subsequent acetylation of H3 and H4. Methylation at Lys-10 (H3K9me) and Lys-28 (H3K27me), which are linked to gene repression, are underrepresented. Methylation at Lys-10 (H3K9me) is a specific target for HP1 proteins (CBX1, CBX3 and CBX5) and prevents subsequent acetylation of H3 and H4. Phosphorylation at Thr-7 (H3T6ph) is a specific tag for epigenetic transcriptional activation that prevents demethylation of Lys-5 (H3K4me) by LSD1/KDM1A. At centromeres, specifically phosphorylated at Thr-12 (H3T11ph) from prophase to early anaphase. Phosphorylation at Thr-12 (H3T11ph) is a specific tag for epigenetic transcriptional activation that promotes demethylation of Lys-10 (H3K9me). Phosphorylation at Tyr-42 (H3Y41ph) promotes exclusion of CBX5 (HP1 alpha) from chromatin. Post-translationally, lysine deamination at Lys-5 (H3K4all) to form allysine. Allysine formation only takes place on H3K4me3 and results in gene repression. In terms of processing, crotonylation (Kcr) is specifically present in male germ cells and marks testis-specific genes in post-meiotic cells, including X-linked genes that escape sex chromosome inactivation in haploid cells. Crotonylation marks active promoters and enhancers and confers resistance to transcriptional repressors. It is also associated with post-meiotically activated genes on autosomes. Butyrylation of histones marks active promoters and competes with histone acetylation. It is present during late spermatogenesis. In terms of tissue distribution, expressed at low level in some tissues, such as testis and brain.

It is found in the nucleus. Its subcellular location is the chromosome. Its function is as follows. Primate-specific variant histone H3, which constitutes a core component of nucleosomes. Histone H3.Y-containing nucleosomes accumulate around transcription start sites and have flexible DNA ends, suggesting that they form relaxed chromatin that allows transcription factor access. Histone H1 binds less efficiently to histone H3.Y-containing nucleosomes. Nucleosomes wrap and compact DNA into chromatin, limiting DNA accessibility to the cellular machineries which require DNA as a template. Histones thereby play a central role in transcription regulation, DNA repair, DNA replication and chromosomal stability. DNA accessibility is regulated via a complex set of post-translational modifications of histones, also called histone code, and nucleosome remodeling. The chain is Histone H3.Y from Homo sapiens (Human).